Consider the following 366-residue polypeptide: MSGGNEEDQLAQCQAYVQRHNIQQLVKEAIVVLCIHKPDNPVLFLKDHFEKLNEQRAQEGGNPDAADDDDIIVEPPKRSGGRRTGISAEPIKEDDTEYKKVVIPKDDATRRSLESAMRKNLLFAHLEEDEQKTMYDAMFPVEKSAGETIIEQGEEGDNFYVIDKGTVDVYVNHEYVLTINEGGSFGELALIYGTPRAATVIAKTDVKLWAIDRLTYRRILMGSVTKKRKMYDEFLSKVQILADLDQWERANVADALERCDFEPGTHVVEQGQPGDEFFIILEGEANVLQKRSDDAPFDVVGHLGMSDYFGEIALLLDRPRAATVVAKTHLKCIKLDRNRFERVMGPVREILKRDVSNYNSYVKLMT.

The dimerization and phosphorylation stretch occupies residues 1–121 (MSGGNEEDQL…SLESAMRKNL (121 aa)). The interval 55-87 (QRAQEGGNPDAADDDDIIVEPPKRSGGRRTGIS) is disordered. The Pseudophosphorylation motif motif lies at 82 to 86 (RRTGI). A Phosphoserine modification is found at serine 87. 3',5'-cyclic AMP contacts are provided by residues 122–239 (LFAH…SKVQ), glutamate 187, arginine 196, 240–366 (ILAD…KLMT), glutamate 311, and arginine 320.

The protein belongs to the cAMP-dependent kinase regulatory chain family. Tetramer, composed of 2 regulatory (R) and 2 catalytic (C) subunits. In the presence of cAMP it dissociates into 2 active monomeric C subunits and an R dimer that binds four cAMP molecules. In terms of processing, the pseudophosphorylation site binds to the substrate-binding region of the catalytic chain but is not phosphorylated. The physiological significance of phosphorylations by other kinases is unclear.

Its subcellular location is the cytoplasm. It is found in the cytosol. Functionally, controls the rhythmic contraction of enteric muscles probably by regulating G-protein coupled receptor aex-2-mediated calcium influx in GABAergic DVB neurons. In Caenorhabditis elegans, this protein is cAMP-dependent protein kinase regulatory subunit (kin-2).